The following is a 360-amino-acid chain: Photosystem II protein D1 1 (360 aa).

3 consecutive transmembrane segments (helical) span residues 29–46, 118–133, and 142–156; these read YVGW…TATT, HFLI…EWEL, and WICV…AATA. Chlorophyll a is bound at residue His118. Position 126 (Tyr126) interacts with pheophytin a. Positions 170 and 189 each coordinate [CaMn4O5] cluster. Residues 197-218 form a helical membrane-spanning segment; that stretch reads FHMLGVAGVFGGSLFSAMHGSL. A chlorophyll a-binding site is contributed by His198. A quinone contacts are provided by residues His215 and 264-265; that span reads SF. His215 is a Fe cation binding site. His272 contributes to the Fe cation binding site. Residues 274–288 form a helical membrane-spanning segment; it reads FLGAWPVVGIWFTAL. 4 residues coordinate [CaMn4O5] cluster: His332, Glu333, Asp342, and Ala344. A propeptide spanning residues 345–360 is cleaved from the precursor; that stretch reads AGEQAPVALQAPAING.

This sequence belongs to the reaction center PufL/M/PsbA/D family. PSII is composed of 1 copy each of membrane proteins PsbA, PsbB, PsbC, PsbD, PsbE, PsbF, PsbH, PsbI, PsbJ, PsbK, PsbL, PsbM, PsbT, PsbX, PsbY, PsbZ, Psb30/Ycf12, peripheral proteins PsbO, CyanoQ (PsbQ), PsbU, PsbV and a large number of cofactors. It forms dimeric complexes. The D1/D2 heterodimer binds P680, chlorophylls that are the primary electron donor of PSII, and subsequent electron acceptors. It shares a non-heme iron and each subunit binds pheophytin, quinone, additional chlorophylls, carotenoids and lipids. D1 provides most of the ligands for the Mn4-Ca-O5 cluster of the oxygen-evolving complex (OEC). There is also a Cl(-1) ion associated with D1 and D2, which is required for oxygen evolution. The PSII complex binds additional chlorophylls, carotenoids and specific lipids. serves as cofactor. Post-translationally, tyr-161 forms a radical intermediate that is referred to as redox-active TyrZ, YZ or Y-Z. C-terminally processed by CtpA; processing is essential to allow assembly of the oxygen-evolving complex and thus photosynthetic growth.

The protein resides in the cellular thylakoid membrane. The enzyme catalyses 2 a plastoquinone + 4 hnu + 2 H2O = 2 a plastoquinol + O2. Photosystem II (PSII) is a light-driven water:plastoquinone oxidoreductase that uses light energy to abstract electrons from H(2)O, generating O(2) and a proton gradient subsequently used for ATP formation. It consists of a core antenna complex that captures photons, and an electron transfer chain that converts photonic excitation into a charge separation. The D1/D2 (PsbA/PsbD) reaction center heterodimer binds P680, the primary electron donor of PSII as well as several subsequent electron acceptors. This Picosynechococcus sp. (strain ATCC 27264 / PCC 7002 / PR-6) (Agmenellum quadruplicatum) protein is Photosystem II protein D1 1.